Reading from the N-terminus, the 255-residue chain is Post-GPI attachment to proteins factor 2 (255 aa).

5 consecutive transmembrane segments (helical) span residues leucine 23–leucine 43, leucine 111–phenylalanine 131, asparagine 143–asparagine 163, leucine 185–serine 205, and alanine 209–phenylalanine 229.

The protein belongs to the PGAP2 family.

It localises to the golgi apparatus membrane. The protein resides in the endoplasmic reticulum membrane. In terms of biological role, involved in the lipid remodeling steps of GPI-anchor maturation. Required for stable expression of GPI-anchored proteins at the cell surface. In Drosophila melanogaster (Fruit fly), this protein is Post-GPI attachment to proteins factor 2.